The following is a 211-amino-acid chain: ATP phosphoribosyltransferase (211 aa).

It belongs to the ATP phosphoribosyltransferase family. Short subfamily. In terms of assembly, heteromultimer composed of HisG and HisZ subunits.

The protein resides in the cytoplasm. It catalyses the reaction 1-(5-phospho-beta-D-ribosyl)-ATP + diphosphate = 5-phospho-alpha-D-ribose 1-diphosphate + ATP. It functions in the pathway amino-acid biosynthesis; L-histidine biosynthesis; L-histidine from 5-phospho-alpha-D-ribose 1-diphosphate: step 1/9. Catalyzes the condensation of ATP and 5-phosphoribose 1-diphosphate to form N'-(5'-phosphoribosyl)-ATP (PR-ATP). Has a crucial role in the pathway because the rate of histidine biosynthesis seems to be controlled primarily by regulation of HisG enzymatic activity. In Bacillus mycoides (strain KBAB4) (Bacillus weihenstephanensis), this protein is ATP phosphoribosyltransferase.